A 60-amino-acid chain; its full sequence is Metallothionein A (60 aa).

The segment at 1–28 (MDPCECSKTGKCNCGTSCTCTNCSCKCC) is beta. Positions 4, 6, 12, 14, 18, 20, 23, 25, 28, 32, 33, 35, 36, 40, 43, 47, 49, 54, 58, and 59 each coordinate a divalent metal cation. The alpha stretch occupies residues 29–60 (KKSCCSCCPSGCSKCASGCVCKGNSCDKSCCQ).

This sequence belongs to the metallothionein superfamily. Type 1 family.

Functionally, metallothioneins have a high content of cysteine residues that bind various heavy metals. The polypeptide is Metallothionein A (mta) (Cyprinodon sp. (Pupfish)).